Consider the following 425-residue polypeptide: LLSITTTHIHAFKPLPISFDDFSDLNRSCFAPGFVFGTASSAFQYEGAAFEDGKGPSIWDTFTHKYPEKIKDRTNGDVAIDEYHRYKEDIGIMKDMNLDAYRFSISWPRVLPKGKLSGGVNREGINYYNNLINEVLANGMQPYVTLFHWDVPQALEDEYRGFLGRNIVDDFRDYAELCFKEFGDRVKHWITLNEPWGVSMNAYAYGTFAPGRCSDWLKLNCTGGDSGREPYLAAHYQLLAHAAAARLYKTKYQASQNGIIGITLVSHWFEPASKEKADVDAAKRGLDFMLGWFMHPLTKGRYPESMRYLVRKRLPKFSTEESKELTGSFDFLGLNYYSSYYAAKAPRIPNARPAIQTDSLINATFEHNGKPLGPMAASSWLCIYPQGIRKLLLYVKNHYNNPVIYITENGRNSSTINTVTSRIPF.

The N-terminal stretch at 1-11 (LLSITTTHIHA) is a signal peptide. Residues Gln-44, His-148, and 193–194 (NE) each bind a beta-D-glucoside. Glu-194 (proton donor) is an active-site residue. Cysteines 213 and 221 form a disulfide. Residue Asn-220 is glycosylated (N-linked (GlcNAc...) asparagine). A beta-D-glucoside is bound by residues Tyr-337 and Glu-408. Glu-408 acts as the Nucleophile in catalysis. Asn-412 is a glycosylation site (N-linked (GlcNAc...) asparagine).

Belongs to the glycosyl hydrolase 1 family. Homodimer. In terms of tissue distribution, leaves.

It catalyses the reaction Hydrolysis of terminal, non-reducing beta-D-glucosyl residues with release of beta-D-glucose.. In terms of biological role, hydrolyzes cyanoglucosides, contributing to the release of hydrocyanic acid, which functions as a defense mechanism against small predators, when the leaf tissue is damaged. The chain is Cyanogenic beta-glucosidase (LI) from Trifolium repens (Creeping white clover).